Here is a 205-residue protein sequence, read N- to C-terminus: Small ribosomal subunit protein uS4 (205 aa).

The interval 18 to 46 is disordered; sequence NIWGRPKSPVNRREYGPGQHGQRRKGKLS. The S4 RNA-binding domain occupies 94–157; it reads RRLDTVVYRS…KQLAIVLEAN (64 aa).

Belongs to the universal ribosomal protein uS4 family. As to quaternary structure, part of the 30S ribosomal subunit. Contacts protein S5. The interaction surface between S4 and S5 is involved in control of translational fidelity.

One of the primary rRNA binding proteins, it binds directly to 16S rRNA where it nucleates assembly of the body of the 30S subunit. Its function is as follows. With S5 and S12 plays an important role in translational accuracy. The chain is Small ribosomal subunit protein uS4 from Rhodopseudomonas palustris (strain BisB5).